A 224-amino-acid polypeptide reads, in one-letter code: Biosynthetic peptidoglycan transglycosylase (224 aa).

Residues 12–32 (ILVVLAILPVFLLLVYSLPFV) traverse the membrane as a helical segment.

The protein belongs to the glycosyltransferase 51 family.

The protein localises to the cell inner membrane. The catalysed reaction is [GlcNAc-(1-&gt;4)-Mur2Ac(oyl-L-Ala-gamma-D-Glu-L-Lys-D-Ala-D-Ala)](n)-di-trans,octa-cis-undecaprenyl diphosphate + beta-D-GlcNAc-(1-&gt;4)-Mur2Ac(oyl-L-Ala-gamma-D-Glu-L-Lys-D-Ala-D-Ala)-di-trans,octa-cis-undecaprenyl diphosphate = [GlcNAc-(1-&gt;4)-Mur2Ac(oyl-L-Ala-gamma-D-Glu-L-Lys-D-Ala-D-Ala)](n+1)-di-trans,octa-cis-undecaprenyl diphosphate + di-trans,octa-cis-undecaprenyl diphosphate + H(+). It functions in the pathway cell wall biogenesis; peptidoglycan biosynthesis. Functionally, peptidoglycan polymerase that catalyzes glycan chain elongation from lipid-linked precursors. The sequence is that of Biosynthetic peptidoglycan transglycosylase from Brucella melitensis biotype 1 (strain ATCC 23456 / CCUG 17765 / NCTC 10094 / 16M).